The primary structure comprises 637 residues: Threonine--tRNA ligase (637 aa).

The TGS domain maps to 1–61 (MLNITLPDGS…VEDSAVQIIT (61 aa)). The segment at 242–533 (DHRKLGKQLD…LIENHAGSFP (292 aa)) is catalytic. Zn(2+)-binding residues include Cys333, His384, and His510.

It belongs to the class-II aminoacyl-tRNA synthetase family. Homodimer. Zn(2+) serves as cofactor.

It localises to the cytoplasm. It catalyses the reaction tRNA(Thr) + L-threonine + ATP = L-threonyl-tRNA(Thr) + AMP + diphosphate + H(+). Catalyzes the attachment of threonine to tRNA(Thr) in a two-step reaction: L-threonine is first activated by ATP to form Thr-AMP and then transferred to the acceptor end of tRNA(Thr). Also edits incorrectly charged L-seryl-tRNA(Thr). This Neisseria meningitidis serogroup A / serotype 4A (strain DSM 15465 / Z2491) protein is Threonine--tRNA ligase.